Consider the following 478-residue polypeptide: Glycogen synthase (478 aa).

ADP-alpha-D-glucose is bound at residue lysine 16.

Belongs to the glycosyltransferase 1 family. Bacterial/plant glycogen synthase subfamily.

It catalyses the reaction [(1-&gt;4)-alpha-D-glucosyl](n) + ADP-alpha-D-glucose = [(1-&gt;4)-alpha-D-glucosyl](n+1) + ADP + H(+). The protein operates within glycan biosynthesis; glycogen biosynthesis. Functionally, synthesizes alpha-1,4-glucan chains using ADP-glucose. The protein is Glycogen synthase of Lachnoclostridium phytofermentans (strain ATCC 700394 / DSM 18823 / ISDg) (Clostridium phytofermentans).